A 492-amino-acid polypeptide reads, in one-letter code: GDP-Man:Man(3)GlcNAc(2)-PP-Dol alpha-1,2-mannosyltransferase (492 aa).

Over 1–19 the chain is Lumenal; sequence MAADTGSWCVYAVLRFFYS. A helical membrane pass occupies residues 20–40; that stretch reads LFFPGLMICGVLCVYLVIGLW. The Cytoplasmic segment spans residues 41–233; sequence VIRWHLQRKK…SRNALLSKAK (193 aa). The segment at residues 234–254 is an intramembrane region (helical); the sequence is LIYYYLFAFVYGLVGSCSDIV. Residues 255-399 are Cytoplasmic-facing; it reads MVNSSWTLNH…IGLHTMWNEH (145 aa). Residues 400–420 constitute an intramembrane region (helical); it reads FGIGVVECMAAGTVILAHNSG. Residues 421 to 492 lie on the Cytoplasmic side of the membrane; sequence GPKLDIVIPH…FLCSMEKLLT (72 aa).

It belongs to the glycosyltransferase group 1 family. Glycosyltransferase 4 subfamily.

Its subcellular location is the endoplasmic reticulum membrane. It carries out the reaction an alpha-D-Man-(1-&gt;3)-[alpha-D-Man-(1-&gt;6)]-beta-D-Man-(1-&gt;4)-beta-D-GlcNAc-(1-&gt;4)-alpha-D-GlcNAc-diphospho-di-trans,poly-cis-dolichol + 2 GDP-alpha-D-mannose = an alpha-D-Man-(1-&gt;2)-alpha-D-Man-(1-&gt;2)-alpha-D-Man-(1-&gt;3)-[alpha-D-Man-(1-&gt;6)]-beta-D-Man-(1-&gt;4)-beta-D-GlcNAc-(1-&gt;4)-alpha-D-GlcNAc-diphospho-di-trans,poly-cis-dolichol + 2 GDP + 2 H(+). It participates in protein modification; protein glycosylation. Its function is as follows. GDP-Man:Man(3)GlcNAc(2)-PP-Dol alpha-1,2-mannosyltransferase that operates in the biosynthetic pathway of dolichol-linked oligosaccharides, the glycan precursors employed in protein asparagine (N)-glycosylation. The assembly of dolichol-linked oligosaccharides begins on the cytosolic side of the endoplasmic reticulum membrane and finishes in its lumen. The sequential addition of sugars to dolichol pyrophosphate produces dolichol-linked oligosaccharides containing fourteen sugars, including two GlcNAcs, nine mannoses and three glucoses. Once assembled, the oligosaccharide is transferred from the lipid to nascent proteins by oligosaccharyltransferases. Catalyzes, on the cytoplasmic face of the endoplasmic reticulum, the addition of the fourth and fifth mannose residues to the dolichol-linked oligosaccharide chain, to produce Man(5)GlcNAc(2)-PP-dolichol core oligosaccharide. Man(5)GlcNAc(2)-PP-dolichol is a substrate for ALG3, the following enzyme in the biosynthetic pathway. This is GDP-Man:Man(3)GlcNAc(2)-PP-Dol alpha-1,2-mannosyltransferase from Mus musculus (Mouse).